A 343-amino-acid polypeptide reads, in one-letter code: 2,3,4,5-tetrahydropyridine-2,6-dicarboxylate N-succinyltransferase (343 aa).

E204 lines the Mg(2+) pocket. The active-site Acyl-anhydride intermediate is the E220. Succinyl-CoA is bound by residues R222, G237, S240, A263, 278 to 279, G286, K303, and 316 to 319; these read ES and RRNS.

It belongs to the type 2 tetrahydrodipicolinate N-succinyltransferase family. Homotrimer.

The protein localises to the cytoplasm. It catalyses the reaction (S)-2,3,4,5-tetrahydrodipicolinate + succinyl-CoA + H2O = (S)-2-succinylamino-6-oxoheptanedioate + CoA. It participates in amino-acid biosynthesis; L-lysine biosynthesis via DAP pathway; LL-2,6-diaminopimelate from (S)-tetrahydrodipicolinate (succinylase route): step 1/3. Catalyzes the conversion of the cyclic tetrahydrodipicolinate (THDP) into the acyclic N-succinyl-L-2-amino-6-oxopimelate using succinyl-CoA. This chain is 2,3,4,5-tetrahydropyridine-2,6-dicarboxylate N-succinyltransferase, found in Vibrio cholerae serotype O1 (strain ATCC 39315 / El Tor Inaba N16961).